Here is a 311-residue protein sequence, read N- to C-terminus: Phosphoribosylaminoimidazole-succinocarboxamide synthase (311 aa).

The protein belongs to the SAICAR synthetase family.

It carries out the reaction 5-amino-1-(5-phospho-D-ribosyl)imidazole-4-carboxylate + L-aspartate + ATP = (2S)-2-[5-amino-1-(5-phospho-beta-D-ribosyl)imidazole-4-carboxamido]succinate + ADP + phosphate + 2 H(+). Its pathway is purine metabolism; IMP biosynthesis via de novo pathway; 5-amino-1-(5-phospho-D-ribosyl)imidazole-4-carboxamide from 5-amino-1-(5-phospho-D-ribosyl)imidazole-4-carboxylate: step 1/2. This chain is Phosphoribosylaminoimidazole-succinocarboxamide synthase, found in Azoarcus sp. (strain BH72).